Here is a 413-residue protein sequence, read N- to C-terminus: Putative competence-damage inducible protein (413 aa).

It belongs to the CinA family.

The sequence is that of Putative competence-damage inducible protein from Alkaliphilus oremlandii (strain OhILAs) (Clostridium oremlandii (strain OhILAs)).